We begin with the raw amino-acid sequence, 130 residues long: Small ribosomal subunit protein uS8 (130 aa).

It belongs to the universal ribosomal protein uS8 family. Part of the 30S ribosomal subunit. Contacts proteins S5 and S12.

Its function is as follows. One of the primary rRNA binding proteins, it binds directly to 16S rRNA central domain where it helps coordinate assembly of the platform of the 30S subunit. In Aeromonas salmonicida (strain A449), this protein is Small ribosomal subunit protein uS8.